A 370-amino-acid polypeptide reads, in one-letter code: Polyadenylate-binding protein 4-like (370 aa).

RRM domains lie at 10–88 (ASLY…WSQR), 98–174 (GNVF…RFKN), 190–267 (TNVY…RAQK), and 293–369 (VKLY…LAQR).

Belongs to the polyadenylate-binding protein type-1 family.

Its function is as follows. May bind RNA. This chain is Polyadenylate-binding protein 4-like (PABPC4L), found in Homo sapiens (Human).